Here is a 410-residue protein sequence, read N- to C-terminus: Chloroacetanilide N-alkylformylase, ferredoxin reductase component (410 aa).

FAD-binding residues include glycine 14, aspartate 36, lysine 49, valine 82, arginine 130, aspartate 279, and valine 298.

It belongs to the FAD-dependent oxidoreductase family. In terms of assembly, the chloroacetanilide N-alkylformylase multicomponent enzyme system is composed of an oxygenase component (CndA) and an electron transfer component formed by a ferredoxin reductase (CndC1) and a ferredoxin (CndB1). In vitro, chloroacetanilide N-alkylformylase assays in which CndB1 is substituted for CndB2 demonstrate that the two enzymes possess nearly identical activities. FAD is required as a cofactor.

It catalyses the reaction 2 reduced [2Fe-2S]-[ferredoxin] + NAD(+) + H(+) = 2 oxidized [2Fe-2S]-[ferredoxin] + NADH. In terms of biological role, component of the chloroacetanilide N-alkylformylase multicomponent enzyme system involved in the degradation of chloroacetanilide herbicides (N-alkoxyalkyl-N-chloroacetyl-substituted aniline derivatives). In vitro, catalyzes the transfers of electrons from ferredoxin (CndB1) to NADH. N-dealkylase utilizes NADH, but not NADPH, as the electron donor. This chain is Chloroacetanilide N-alkylformylase, ferredoxin reductase component, found in Rhizorhabdus wittichii (strain DC-6 / KACC 16600) (Sphingomonas wittichii).